The sequence spans 287 residues: Glutamate racemase (287 aa).

Residues 32–33 (DS) and 64–65 (YG) contribute to the substrate site. C96 acts as the Proton donor/acceptor in catalysis. 97 to 98 (NT) is a binding site for substrate. Catalysis depends on C208, which acts as the Proton donor/acceptor. 209–210 (TH) contacts substrate.

This sequence belongs to the aspartate/glutamate racemases family.

It carries out the reaction L-glutamate = D-glutamate. It functions in the pathway cell wall biogenesis; peptidoglycan biosynthesis. Provides the (R)-glutamate required for cell wall biosynthesis. This is Glutamate racemase from Photorhabdus laumondii subsp. laumondii (strain DSM 15139 / CIP 105565 / TT01) (Photorhabdus luminescens subsp. laumondii).